Consider the following 396-residue polypeptide: Microcin B17-processing protein McbD (396 aa).

In terms of domain architecture, YcaO spans 41 to 396 (ASAAGETLKS…VRESKMVPFP (356 aa)).

It is found in the cytoplasm. Necessary to process the inactive microcin B17 (McbA) precursor into the active peptide. The sequence is that of Microcin B17-processing protein McbD (mcbD) from Escherichia coli.